Here is a 268-residue protein sequence, read N- to C-terminus: tRNA (guanine-N(1)-)-methyltransferase (268 aa).

S-adenosyl-L-methionine-binding positions include Gly-110 and 129-134 (IGDFVM). The disordered stretch occupies residues 246–268 (WGAPPAPVKRHRKRRPETTESAS).

Belongs to the RNA methyltransferase TrmD family. In terms of assembly, homodimer.

Its subcellular location is the cytoplasm. It carries out the reaction guanosine(37) in tRNA + S-adenosyl-L-methionine = N(1)-methylguanosine(37) in tRNA + S-adenosyl-L-homocysteine + H(+). Functionally, specifically methylates guanosine-37 in various tRNAs. The chain is tRNA (guanine-N(1)-)-methyltransferase from Deinococcus deserti (strain DSM 17065 / CIP 109153 / LMG 22923 / VCD115).